The chain runs to 445 residues: Selenocysteine lyase (445 aa).

Met-1 bears the N-acetylmethionine mark. Residues 1–28 (MEAAVAPGRDAPAPAASQPSGCGKHNSP) are disordered. Position 129 is a phosphoserine (Ser-129). The residue at position 259 (Lys-259) is an N6-(pyridoxal phosphate)lysine. Cys-388 acts as the S-selanylcysteine intermediate in catalysis.

The protein belongs to the class-V pyridoxal-phosphate-dependent aminotransferase family. In terms of assembly, homodimer. The cofactor is pyridoxal 5'-phosphate.

It localises to the cytoplasm. Its subcellular location is the cytosol. The catalysed reaction is L-selenocysteine + AH2 = hydrogenselenide + L-alanine + A + H(+). In terms of biological role, catalyzes the decomposition of L-selenocysteine to L-alanine and elemental selenium. The polypeptide is Selenocysteine lyase (SCLY) (Homo sapiens (Human)).